The primary structure comprises 507 residues: DNA replication licensing factor MCM6 (507 aa).

The region spanning 32-239 is the MCM domain; the sequence is LYHNLCTSLF…TDYAIARRIV (208 aa). The ATP site is built by H45, S85, T86, A87, K88, S89, and N190. Positions 214–217 match the Arginine finger motif; sequence SRFD. ADP is bound by residues R305 and E308. Residue K329 is modified to N6-acetyllysine. The disordered stretch occupies residues 365–392; it reads GPGGINGHADSPAPVNGFNGSGEDASQE. Phosphoserine occurs at positions 375, 390, and 448. T477 carries the post-translational modification Phosphothreonine.

Belongs to the MCM family. Component of the MCM2-7 complex. The complex forms a toroidal hexameric ring with the proposed subunit order MCM2-MCM6-MCM4-MCM7-MCM3-MCM5. Component of the CMG helicase complex, a hexameric ring of related MCM2-7 subunits stabilized by CDC45 and the tetrameric GINS complex. May interact with MCM10. Interacts with TIPIN. Interacts with CDT1. Interacts with MCMBP. Interacts with DDI2. In terms of processing, O-glycosylated (O-GlcNAcylated), in a cell cycle-dependent manner.

It is found in the nucleus. The protein resides in the chromosome. The catalysed reaction is ATP + H2O = ADP + phosphate + H(+). Its function is as follows. Acts as a component of the MCM2-7 complex (MCM complex) which is the replicative helicase essential for 'once per cell cycle' DNA replication initiation and elongation in eukaryotic cells. Core component of CDC45-MCM-GINS (CMG) helicase, the molecular machine that unwinds template DNA during replication, and around which the replisome is built. The active ATPase sites in the MCM2-7 ring are formed through the interaction surfaces of two neighboring subunits such that a critical structure of a conserved arginine finger motif is provided in trans relative to the ATP-binding site of the Walker A box of the adjacent subunit. The six ATPase active sites, however, are likely to contribute differentially to the complex helicase activity. This Rattus norvegicus (Rat) protein is DNA replication licensing factor MCM6 (Mcm6).